The chain runs to 172 residues: Envelope protein UL45 (172 aa).

At 1 to 27 (MAFRASGPAYQPLAPAASPARARVPAV) the chain is on the intravirion side. A helical; Signal-anchor for type II membrane protein transmembrane segment spans residues 28-48 (AWIGVGAIVGAFALVAALVLV). At 49–172 (PPRSSWGLSP…TSIRNALGLP (124 aa)) the chain is on the virion surface side.

It belongs to the herpesviridae HHV-1 UL45 family.

Its subcellular location is the virion membrane. Its function is as follows. Important virulence factor of HSV neurotropism. Seems to be required for glycoprotein B-induced fusion. Dispensable for growth in vitro. In Homo sapiens (Human), this protein is Envelope protein UL45.